The chain runs to 1406 residues: Receptor-type tyrosine-protein phosphatase eta (1406 aa).

Positions 1–24 (MRRLPLLPPCPLLLLLLLPAEVRC) are cleaved as a signal peptide. Over 25-1044 (TTACTDDCSL…LPQDPGVIAG (1020 aa)) the chain is Extracellular. Asn36, Asn52, Asn97, Asn103, Asn118, Asn124, Asn186, Asn192, Asn243, Asn275, Asn281, Asn296, Asn302, Asn331, Asn332, Asn364, Asn385, Asn391, Asn453, Asn459, Asn484, Asn500, Asn510, Asn547, Asn568, Asn630, Asn636, Asn651, Asn657, Asn719, Asn745, Asn750, Asn766, Asn776, Asn804, and Asn828 each carry an N-linked (GlcNAc...) asparagine glycan. The disordered stretch occupies residues 39 to 72 (EEMGTSSNDELSVNATSGNRRLSEDVSLPGRAMS). Residues 41–58 (MGTSSNDELSVNATSGNR) are compositionally biased toward polar residues. 10 Fibronectin type-III domains span residues 82–170 (AVLD…TKPS), 171–259 (PVLD…TKPS), 260–343 (PVLD…SLNL), 346–437 (KPSP…TKPS), 438–523 (PVLD…SLYT), 524–614 (KPTP…TKPR), 615–703 (AVLH…TKPS), 704–793 (MVLN…VPSS), 794–888 (VNAF…TDPP), and 887–979 (PPVP…IVDV). A glycan (N-linked (GlcNAc...) asparagine) is linked at Asn1010. A helical membrane pass occupies residues 1045-1065 (AVIGCLLAILAVVAIGGYIFW). Residues 1066–1406 (RRRRKDKRNT…AFGKANGYHA (341 aa)) are Cytoplasmic-facing. The 258-residue stretch at 1110 to 1367 (FAEEYEELKS…VFLNQCVMDI (258 aa)) folds into the Tyrosine-protein phosphatase domain. Substrate is bound by residues Asp1274, 1308 to 1314 (CSAGVGR), and Gln1352. Cys1308 (phosphocysteine intermediate) is an active-site residue.

Belongs to the protein-tyrosine phosphatase family. Receptor class 3 subfamily. As to expression, found on the apical surfaces of retinal Mueller cells, renal tubule cells and intestinal brush border cells.

It localises to the cell membrane. It is found in the cell projection. The protein resides in the ruffle membrane. Its subcellular location is the cell junction. The enzyme catalyses O-phospho-L-tyrosyl-[protein] + H2O = L-tyrosyl-[protein] + phosphate. Functionally, tyrosine phosphatase which dephosphorylates or contributes to the dephosphorylation of several substrates. Plays a role in cell adhesion, migration, proliferation and differentiation. Has a role in megakaryocytes and platelet formation. May influence the potential of nonsensory supporting cells to either proliferate or differentiate into hair cells. The protein is Receptor-type tyrosine-protein phosphatase eta (PTPRJ) of Gallus gallus (Chicken).